The following is a 60-amino-acid chain: Potassium channel toxin alpha-KTx 29.1 (60 aa).

A signal peptide spans M1–A28. 3 cysteine pairs are disulfide-bonded: C32–C51, C40–C56, and C44–C58.

It belongs to the short scorpion toxin superfamily. Potassium channel inhibitor family. Alpha-KTx 29 subfamily. In terms of tissue distribution, expressed by the venom gland.

Its subcellular location is the secreted. In terms of biological role, weakly inhibits the Kv1.3/KCNA3 channel (1 uM of the toxin inhibits currents by 13.2%) and Kv7.1/KCNQ1 channel (10 uM of the toxin inhibits currents by 27.7%). The sequence is that of Potassium channel toxin alpha-KTx 29.1 from Lychas mucronatus (Chinese swimming scorpion).